The chain runs to 1454 residues: Mediator of RNA polymerase II transcription subunit 14 (1454 aa).

A disordered region spans residues 1 to 34 (MAPVQLENHQLVPPGGGGGGSGGPPSAPAPPPPG). The span at 14–23 (PGGGGGGSGG) shows a compositional bias: gly residues. Pro residues predominate over residues 25-34 (PSAPAPPPPG). An LXXLL motif 1 motif is present at residues 69 to 73 (LTDLL). Residues 188–566 (KQATLHQLNQ…VPNKPTQLSY (379 aa)) are interaction with STAT2. Residues 500–824 (LGQQRCKQSI…TKGSSISIQW (325 aa)) form an interaction with SREBF1 region. S617 and S986 each carry phosphoserine. The segment at 973 to 1167 (ARRRSVNEDD…MPPPRKLPQR (195 aa)) is disordered. Residues 1001–1011 (QPPPQQQPFPK) are compositionally biased toward pro residues. 2 stretches are compositionally biased toward polar residues: residues 1024 to 1054 (PPTS…SSPS) and 1092 to 1101 (DPSSPYTMVS). 5 positions are modified to phosphoserine: S1112, S1119, S1128, S1136, and S1144. The segment covering 1147–1156 (AGTSSQTMPT) has biased composition (polar residues). The LXXLL motif 2 signature appears at 1182 to 1186 (LNILL).

Belongs to the Mediator complex subunit 14 family. As to quaternary structure, interacts with GATA1. Component of the Mediator complex, which is composed of MED1, MED4, MED6, MED7, MED8, MED9, MED10, MED11, MED12, MED13, MED13L, MED14, MED15, MED16, MED17, MED18, MED19, MED20, MED21, MED22, MED23, MED24, MED25, MED26, MED27, MED29, MED30, MED31, CCNC, CDK8 and CDC2L6/CDK11. The MED12, MED13, CCNC and CDK8 subunits form a distinct module termed the CDK8 module. Mediator containing the CDK8 module is less active than Mediator lacking this module in supporting transcriptional activation. Individual preparations of the Mediator complex lacking one or more distinct subunits have been variously termed ARC, CRSP, DRIP, PC2, SMCC and TRAP. Interacts with AR, ESR1, SREBF1 and STAT2. As to expression, ubiquitous.

The protein localises to the nucleus. Component of the Mediator complex, a coactivator involved in the regulated transcription of nearly all RNA polymerase II-dependent genes. Mediator functions as a bridge to convey information from gene-specific regulatory proteins to the basal RNA polymerase II transcription machinery. Mediator is recruited to promoters by direct interactions with regulatory proteins and serves as a scaffold for the assembly of a functional preinitiation complex with RNA polymerase II and the general transcription factors. The protein is Mediator of RNA polymerase II transcription subunit 14 (MED14) of Homo sapiens (Human).